Here is a 379-residue protein sequence, read N- to C-terminus: L-lactate dehydrogenase (379 aa).

An FMN hydroxy acid dehydrogenase domain is found at 1-379 (MIISASTDYR…IGRDSLVNLP (379 aa)). Residue Tyr-24 coordinates substrate. FMN-binding residues include Ser-106 and Gln-127. Tyr-129 contributes to the substrate binding site. Residue Thr-155 participates in FMN binding. A substrate-binding site is contributed by Arg-164. Residue Lys-251 coordinates FMN. Residue His-275 is the Proton acceptor of the active site. Residue Arg-278 participates in substrate binding. Residue 306–330 (DSGIRTGLDVVRMLALGADTVLLGR) participates in FMN binding.

It belongs to the FMN-dependent alpha-hydroxy acid dehydrogenase family. Requires FMN as cofactor.

It is found in the cell inner membrane. The enzyme catalyses (S)-lactate + A = pyruvate + AH2. Its function is as follows. Catalyzes the conversion of L-lactate to pyruvate. Is coupled to the respiratory chain. This Stenotrophomonas maltophilia (strain R551-3) protein is L-lactate dehydrogenase.